Reading from the N-terminus, the 116-residue chain is Large ribosomal subunit protein bL20 (116 aa).

This sequence belongs to the bacterial ribosomal protein bL20 family.

Binds directly to 23S ribosomal RNA and is necessary for the in vitro assembly process of the 50S ribosomal subunit. It is not involved in the protein synthesizing functions of that subunit. This Desulfatibacillum aliphaticivorans protein is Large ribosomal subunit protein bL20.